Consider the following 156-residue polypeptide: Ribosome maturation factor RimP (156 aa).

It belongs to the RimP family.

The protein resides in the cytoplasm. Required for maturation of 30S ribosomal subunits. This chain is Ribosome maturation factor RimP, found in Prochlorococcus marinus (strain NATL1A).